Here is a 417-residue protein sequence, read N- to C-terminus: Serine hydroxymethyltransferase (417 aa).

Residues Leu120 and 124–126 (GHL) contribute to the (6S)-5,6,7,8-tetrahydrofolate site. At Lys229 the chain carries N6-(pyridoxal phosphate)lysine. Residue 354 to 356 (SPF) coordinates (6S)-5,6,7,8-tetrahydrofolate.

It belongs to the SHMT family. Homodimer. It depends on pyridoxal 5'-phosphate as a cofactor.

The protein localises to the cytoplasm. The catalysed reaction is (6R)-5,10-methylene-5,6,7,8-tetrahydrofolate + glycine + H2O = (6S)-5,6,7,8-tetrahydrofolate + L-serine. It participates in one-carbon metabolism; tetrahydrofolate interconversion. The protein operates within amino-acid biosynthesis; glycine biosynthesis; glycine from L-serine: step 1/1. In terms of biological role, catalyzes the reversible interconversion of serine and glycine with tetrahydrofolate (THF) serving as the one-carbon carrier. This reaction serves as the major source of one-carbon groups required for the biosynthesis of purines, thymidylate, methionine, and other important biomolecules. Also exhibits THF-independent aldolase activity toward beta-hydroxyamino acids, producing glycine and aldehydes, via a retro-aldol mechanism. In Acinetobacter baylyi (strain ATCC 33305 / BD413 / ADP1), this protein is Serine hydroxymethyltransferase.